Here is a 124-residue protein sequence, read N- to C-terminus: Large ribosomal subunit protein bL12 (124 aa).

This sequence belongs to the bacterial ribosomal protein bL12 family. Homodimer. Part of the ribosomal stalk of the 50S ribosomal subunit. Forms a multimeric L10(L12)X complex, where L10 forms an elongated spine to which 2 to 4 L12 dimers bind in a sequential fashion. Binds GTP-bound translation factors.

In terms of biological role, forms part of the ribosomal stalk which helps the ribosome interact with GTP-bound translation factors. Is thus essential for accurate translation. This is Large ribosomal subunit protein bL12 from Desulfitobacterium hafniense (strain DSM 10664 / DCB-2).